The sequence spans 381 residues: Queuine tRNA-ribosyltransferase (381 aa).

Asp-96 (proton acceptor) is an active-site residue. Substrate-binding positions include 96 to 100 (DSGGF), Asp-150, Gln-193, and Gly-220. The interval 251-257 (GVGSPDS) is RNA binding. The active-site Nucleophile is Asp-270. An RNA binding; important for wobble base 34 recognition region spans residues 275 to 279 (TRIAR). 4 residues coordinate Zn(2+): Cys-308, Cys-310, Cys-313, and His-339.

Belongs to the queuine tRNA-ribosyltransferase family. In terms of assembly, homodimer. Within each dimer, one monomer is responsible for RNA recognition and catalysis, while the other monomer binds to the replacement base PreQ1. Zn(2+) serves as cofactor.

It catalyses the reaction 7-aminomethyl-7-carbaguanine + guanosine(34) in tRNA = 7-aminomethyl-7-carbaguanosine(34) in tRNA + guanine. Its pathway is tRNA modification; tRNA-queuosine biosynthesis. Catalyzes the base-exchange of a guanine (G) residue with the queuine precursor 7-aminomethyl-7-deazaguanine (PreQ1) at position 34 (anticodon wobble position) in tRNAs with GU(N) anticodons (tRNA-Asp, -Asn, -His and -Tyr). Catalysis occurs through a double-displacement mechanism. The nucleophile active site attacks the C1' of nucleotide 34 to detach the guanine base from the RNA, forming a covalent enzyme-RNA intermediate. The proton acceptor active site deprotonates the incoming PreQ1, allowing a nucleophilic attack on the C1' of the ribose to form the product. After dissociation, two additional enzymatic reactions on the tRNA convert PreQ1 to queuine (Q), resulting in the hypermodified nucleoside queuosine (7-(((4,5-cis-dihydroxy-2-cyclopenten-1-yl)amino)methyl)-7-deazaguanosine). In Bacillus pumilus (strain SAFR-032), this protein is Queuine tRNA-ribosyltransferase.